The primary structure comprises 229 residues: uncharacterized protein (229 aa).

The next 7 helical transmembrane spans lie at 6–26 (LFFV…FLPT), 36–56 (LVSV…ILLA), 80–99 (SVYD…HRIY), 114–134 (VLSV…HLII), 144–164 (IFEY…ATML), 174–194 (FYYH…IYKF), and 207–224 (YVEA…VLSS).

This sequence belongs to the mimivirus L68/R809 family.

It localises to the membrane. This is an uncharacterized protein from Acanthamoeba polyphaga (Amoeba).